A 278-amino-acid chain; its full sequence is MAVSQTFPPGPAHEPASALMEPCARSLAEGFLEEELRLNAELSQLQFPEPVGVIYNPVDYAWEPHRNYVTRYCQGPKEVLFLGMNPGPFGMAQTGVPFGEVNVVRDWLGIGGSVLSPPQEHPKRPVLGLECPQSEVSGARFWGFFRTLCGQPQVFFRHCFVHNLCPLLFLAPSGRNLTPADLPAKHREQLLSICDAALCRQVQLLGVRLVVGVGRLAEQRARRALAGLTPEVQVEGLLHPSPRSPQANKGWETAARERLQELGLLPLLTDEGSVRPTP.

Residues Met-84, Phe-98, and Asn-163 each contribute to the substrate site. The tract at residues 173 to 187 (SGRNLTPADLPAKHR) is DNA-binding. Substrate is bound at residue His-239.

This sequence belongs to the uracil-DNA glycosylase (UDG) superfamily. SMUG1 family.

Its subcellular location is the nucleus. Its function is as follows. Recognizes base lesions in the genome and initiates base excision DNA repair. Acts as a monofunctional DNA glycosylase specific for uracil (U) residues in DNA with a preference for single-stranded DNA substrates. The activity is greater toward mismatches (U/G) compared to matches (U/A). Excises uracil (U), 5-formyluracil (fU) and uracil derivatives bearing an oxidized group at C5 [5-hydroxyuracil (hoU) and 5-hydroxymethyluracil (hmU)] in ssDNA and dsDNA, but not analogous cytosine derivatives (5-hydroxycytosine and 5-formylcytosine), nor other oxidized bases. The activity is damage-specific and salt-dependent. The substrate preference is the following: ssDNA &gt; dsDNA (G pair) = dsDNA (A pair) at low salt concentration, and dsDNA (G pair) &gt; dsDNA (A pair) &gt; ssDNA at high salt concentration. The polypeptide is Single-strand selective monofunctional uracil-DNA glycosylase (Smug1) (Rattus norvegicus (Rat)).